A 678-amino-acid polypeptide reads, in one-letter code: Geranylgeranyl transferase type-2 subunit alpha 1 (678 aa).

PFTA repeat units follow at residues 40-74, 86-120, 121-155, 156-190, and 201-235; these read YTNE…DRLA, ILDE…KGHS, SVGN…LTNR, SEQD…SLLA, and KIPE…QTLN. LRR repeat units lie at residues 510–532, 533–554, 555–578, 580–604, and 638–663; these read MNNL…VEKL, LFVQ…LEAM, QLLS…SLRH, KQLK…RYLC, and DLNL…VLQV.

It belongs to the protein prenyltransferase subunit alpha family. As to quaternary structure, heterotrimer composed of the alpha subunit RGTA, the beta subunit RGTB and REP; within this trimer, RGTA and RGTB form the catalytic component, while REP mediates peptide substrate binding.

It carries out the reaction geranylgeranyl diphosphate + L-cysteinyl-[protein] = S-geranylgeranyl-L-cysteinyl-[protein] + diphosphate. With respect to regulation, the enzymatic reaction requires the aid of the Rab escort protein REP. Catalyzes the transfer of a geranylgeranyl moiety from geranylgeranyl diphosphate to both cysteines of Rab proteins with the C-terminal sequence -CCXX, CXXX, -XCCX and -XCXC, such as RABA1A, RABA2A, RABF2A and RABG2. In vitro, can prenylate PGGTI targets with the C-terminal Cys-aliphatic-aliphatic-X (CaaX) with leucine in the terminal position. Substrates with the C-terminal sequence -CSIL such as ARAC11/ROP1 or GG2/AGG2 are prenylated independently of REP and when the alpha subunit is associated with a beta subunit (RGTB1 or RGTB2). This is Geranylgeranyl transferase type-2 subunit alpha 1 from Arabidopsis thaliana (Mouse-ear cress).